A 545-amino-acid polypeptide reads, in one-letter code: Chaperonin GroEL (545 aa).

ATP contacts are provided by residues 30–33 (TLGP), Lys-51, 87–91 (DGTTT), Gly-415, and Asp-495.

It belongs to the chaperonin (HSP60) family. As to quaternary structure, forms a cylinder of 14 subunits composed of two heptameric rings stacked back-to-back. Interacts with the co-chaperonin GroES.

The protein resides in the cytoplasm. It catalyses the reaction ATP + H2O + a folded polypeptide = ADP + phosphate + an unfolded polypeptide.. Functionally, together with its co-chaperonin GroES, plays an essential role in assisting protein folding. The GroEL-GroES system forms a nano-cage that allows encapsulation of the non-native substrate proteins and provides a physical environment optimized to promote and accelerate protein folding. The sequence is that of Chaperonin GroEL from Shewanella sp. (strain W3-18-1).